The primary structure comprises 563 residues: DNA mismatch repair protein MutL (563 aa).

It belongs to the DNA mismatch repair MutL/HexB family.

In terms of biological role, this protein is involved in the repair of mismatches in DNA. It is required for dam-dependent methyl-directed DNA mismatch repair. May act as a 'molecular matchmaker', a protein that promotes the formation of a stable complex between two or more DNA-binding proteins in an ATP-dependent manner without itself being part of a final effector complex. This is DNA mismatch repair protein MutL from Trichormus variabilis (strain ATCC 29413 / PCC 7937) (Anabaena variabilis).